A 197-amino-acid polypeptide reads, in one-letter code: MASLALRGSSENPAPTKDTTTNPRGIPYAPFVDRVEDYVTSTTDVESTLKSFSEMISKYQFMESNTQRRSAGLKDKIPEIQKTLAMVRFLAGREEDDEPLETHFELNDTLYAKALVPTTKEVYLWLGANVMLAYPVDEAEELLVGKLGAAKTSLENCDEDLDFLREQITTLEVATARVYNWDVGQRRKEREGKGGKS.

The disordered stretch occupies residues 1–26 (MASLALRGSSENPAPTKDTTTNPRGI). Over residues 9 to 23 (SSENPAPTKDTTTNP) the composition is skewed to polar residues.

Belongs to the prefoldin subunit alpha family. In terms of assembly, heterohexamer of two PFD-alpha type and four PFD-beta type subunits.

Prefoldin subunit; part of the gene cluster that mediates the biosynthesis of elsinochromes, pigments consisting of at least four interconvertible tautomers (A, B, C and D) that have a core phenolic quinone to which various side chains are attached and which play an important role in fungal pathogenesis. The non-reducing polyketide synthase PKS1 was proposed to iteratively catalyze decarboxylation between acetyl-CoA and malonyl-CoA subunits for polyketide chain elongation. The released polyketide undergoes cyclization to form an aromatic ring, and proceeds via serial modification steps to produce the heptaketide back- bone of elsinochrome. As elsinochrome has a symmetrical structure, two identical heptaketides are fused to form a core 1,2-dihydrobenzo-perylene ring structure, which can then be successively modified to produce the various derivatives of elsinochrome. Some of these reactions may be cooperatively carried out, at least in part, by the products of RDT1, OXR1 and PKS1. PRF1, embedded within the elsinochrome cluster possibly functions to stabilize some of the biosynthetic enzymes required for elsinochrome production. As prefoldin is a hexamer containing 2 a and 4 b subunits, additional prefoldin subunits, whose coding genes may not immediately link to the elsinochrome biosynthetic gene cluster, are required to fulfill the chaperone function. In addition, no methyltransferase-coding gene exists within the biosynthetic gene cluster, even though elsinochrome has four methyl groups at positions C3, C7, C8 and C12. Apparently, the identified gene cluster does not contain the entire entourage of genes responsible for elsinochrome biosynthesis. Once elsinochrome is synthesized, it must be exported outside the fungal cells, which is probably accomplished by the ECT1 transporter, to avoid toxicity. This is Prefoldin subunit 3 from Elsinoe fawcettii (Citrus scab fungus).